A 188-amino-acid chain; its full sequence is Large ribosomal subunit protein eL18 (188 aa).

Residues 151-188 (HFGPAPGVPHSHTKPLVRSKGRKFERARGRRKSCGYKK) form a disordered region. 2 stretches are compositionally biased toward basic residues: residues 161–171 (SHTKPLVRSKG) and 178–188 (RGRRKSCGYKK).

Belongs to the eukaryotic ribosomal protein eL18 family.

The protein localises to the cytoplasm. The sequence is that of Large ribosomal subunit protein eL18 (RpL18) from Lysiphlebus testaceipes (Greenbugs aphid parastoid).